Reading from the N-terminus, the 403-residue chain is Peptidyl-prolyl cis-trans isomerase FKBP8 (403 aa).

Residues 26 to 54 (VLDGVDDAEEEDDLSGLPPLEDMGQPTVE) form a disordered region. Positions 28-39 (DGVDDAEEEDDL) are enriched in acidic residues. The PPIase FKBP-type domain maps to 110–195 (GQVVTVHLQM…CLEVTLKTAE (86 aa)). The TPR 1 repeat unit spans residues 212-245 (ANRKRECGNAHYQRADFVLAANSYDLAIKAITSN). Glycyl lysine isopeptide (Lys-Gly) (interchain with G-Cter in ubiquitin) cross-links involve residues lysine 240, lysine 262, lysine 264, and lysine 275. TPR repeat units lie at residues 263 to 296 (VKCL…QPDN) and 297 to 330 (IKAL…EPSN). Residue serine 287 is modified to Phosphoserine. Glycyl lysine isopeptide (Lys-Gly) (interchain with G-Cter in ubiquitin) cross-links involve residues lysine 298, lysine 305, lysine 325, lysine 331, lysine 339, lysine 342, and lysine 343. Residues 381–401 (WLFGATAVALGGVALSVVIAA) form a helical membrane-spanning segment.

In terms of assembly, homomultimers or heteromultimers (Potential). Forms heterodimer with calmodulin. When activated by calmodulin and calcium, interacts with the BH4 domain of BCL2 and weakly with BCLX isoform Bcl-X(L). Does not bind and inhibit calcineurin. Interacts with ZFYVE27; may negatively regulate ZFYVE27 phosphorylation. It depends on Ca(2+) as a cofactor. In terms of processing, ubiquitinated by PRKN during mitophagy, leading to its degradation and enhancement of mitophagy. Deubiquitinated by USP30.

It is found in the mitochondrion membrane. It catalyses the reaction [protein]-peptidylproline (omega=180) = [protein]-peptidylproline (omega=0). In terms of biological role, constitutively inactive PPiase, which becomes active when bound to calmodulin and calcium. Seems to act as a chaperone for BCL2, targets it to the mitochondria and modulates its phosphorylation state. The BCL2/FKBP8/calmodulin/calcium complex probably interferes with the binding of BCL2 to its targets. The active form of FKBP8 may therefore play a role in the regulation of apoptosis. In Rattus norvegicus (Rat), this protein is Peptidyl-prolyl cis-trans isomerase FKBP8 (Fkbp8).